Here is a 138-residue protein sequence, read N- to C-terminus: Translation initiation factor 5A (138 aa).

Lysine 42 carries the hypusine modification.

It belongs to the eIF-5A family.

It localises to the cytoplasm. Functionally, functions by promoting the formation of the first peptide bond. The protein is Translation initiation factor 5A (eif5a) of Pyrobaculum aerophilum (strain ATCC 51768 / DSM 7523 / JCM 9630 / CIP 104966 / NBRC 100827 / IM2).